Consider the following 217-residue polypeptide: Ribosomal RNA small subunit methyltransferase G (217 aa).

Residues glycine 76, phenylalanine 81, 128–129 (LE), and arginine 142 each bind S-adenosyl-L-methionine.

Belongs to the methyltransferase superfamily. RNA methyltransferase RsmG family.

The protein resides in the cytoplasm. It carries out the reaction guanosine(527) in 16S rRNA + S-adenosyl-L-methionine = N(7)-methylguanosine(527) in 16S rRNA + S-adenosyl-L-homocysteine. Its function is as follows. Specifically methylates the N7 position of guanine in position 527 of 16S rRNA. This Rhizorhabdus wittichii (strain DSM 6014 / CCUG 31198 / JCM 15750 / NBRC 105917 / EY 4224 / RW1) (Sphingomonas wittichii) protein is Ribosomal RNA small subunit methyltransferase G.